A 216-amino-acid chain; its full sequence is MRLTLLLEMAAKLKLPHDYRFGMSRPSTLAAKRRNPPGKRRSKVFVEPVSKEEWQYFRGDTVEVLHGKDAGKQGKVTQVVRARNWVVVDGLNTHFRYVGRTDEYRGTYVASEGPLLLNQVSLIDPTDRKPTEIEWRYTEEGERVRVSARSGRIIPKPVLQRRDGIIPEQWKDGPKDTSVEDALERTYVPSLKTFQEEIMEKTGIAENRRHRKSYWY.

A mitochondrion-targeting transit peptide spans 1–9 (MRLTLLLEM). Positions 56–89 (YFRGDTVEVLHGKDAGKQGKVTQVVRARNWVVVD) constitute a KOW domain.

Belongs to the universal ribosomal protein uL24 family. Component of the mitochondrial ribosome large subunit (39S) which comprises a 16S rRNA and about 50 distinct proteins. As to expression, ubiquitous. Expressed at greater levels in the kidney, adipose tissue, muscle and liver than the brain, heart, ovary and lung.

It is found in the mitochondrion. This is Large ribosomal subunit protein uL24m (mrpl24) from Xenopus laevis (African clawed frog).